We begin with the raw amino-acid sequence, 245 residues long: Phycocyanobilin:ferredoxin oxidoreductase (245 aa).

Belongs to the HY2 family.

The catalysed reaction is (2R,3Z)-phycocyanobilin + 4 oxidized [2Fe-2S]-[ferredoxin] = biliverdin IXalpha + 4 reduced [2Fe-2S]-[ferredoxin] + 4 H(+). Its function is as follows. Catalyzes the four-electron reduction of biliverdin IX-alpha (2-electron reduction at both the A and D rings); the reaction proceeds via an isolatable 2-electron intermediate, 181,182-dihydrobiliverdin. The chain is Phycocyanobilin:ferredoxin oxidoreductase from Rippkaea orientalis (strain PCC 8801 / RF-1) (Cyanothece sp. (strain PCC 8801)).